Consider the following 40-residue polypeptide: Natriuretic peptide PaNP-b (40 aa).

Cys-9 and Cys-25 are oxidised to a cystine. A propeptide spanning residues 36 to 40 (IPGGS) is cleaved from the precursor.

It belongs to the natriuretic peptide family. Expressed by the venom gland.

The protein localises to the secreted. Functionally, snake venom natriuretic peptide that targets both NPR1 and NPR2. Exhibits hypotensive and vasodepressor activities. The sequence is that of Natriuretic peptide PaNP-b from Pseudechis australis (Mulga snake).